Here is a 360-residue protein sequence, read N- to C-terminus: Nucleoporin SEH1 (360 aa).

WD repeat units follow at residues 10–49, 55–96, 111–152, 160–210, 217–258, and 276–315; these read DHKD…DWHC, THSG…SNDK, DSRT…NLSQ, SCKL…RKYA, SVSD…KELS, and NHNS…NWKC.

The protein belongs to the WD repeat SEC13 family. In terms of assembly, component of the Nup107-160 subcomplex of the nuclear pore complex (NPC). The Nup107-160 subcomplex includes NUP160, NUP133, NUP107, NUP98, NUP85, NUP43, NUP37, SEH1 and SEC13. Component of the GATOR2 subcomplex, composed of MIOS, SEC13, SEH1L, WDR24 and WDR59. The GATOR2 complex interacts with CASTOR1 and CASTOR2; the interaction is negatively regulated by arginine. The GATOR2 complex interacts with SESN1, SESN2 and SESN3; the interaction is negatively regulated by amino acids.

It is found in the chromosome. The protein localises to the centromere. It localises to the kinetochore. Its subcellular location is the nucleus. The protein resides in the nuclear pore complex. It is found in the lysosome membrane. The GATOR2 complex is negatively regulated by the upstream amino acid sensors CASTOR1 and SESN2, which sequester the GATOR2 complex in absence of amino acids. In the presence of abundant amino acids, GATOR2 is released from CASTOR1 and SESN2 and activated. Functionally, component of the Nup107-160 subcomplex of the nuclear pore complex (NPC). The Nup107-160 subcomplex is required for the assembly of a functional NPC. The Nup107-160 subcomplex is also required for normal kinetochore microtubule attachment, mitotic progression and chromosome segregation. This subunit plays a role in recruitment of the Nup107-160 subcomplex to the kinetochore. In terms of biological role, as a component of the GATOR2 complex, functions as an activator of the amino acid-sensing branch of the mTORC1 signaling pathway. The GATOR2 complex indirectly activates mTORC1 through the inhibition of the GATOR1 subcomplex. GATOR2 probably acts as an E3 ubiquitin-protein ligase toward GATOR1. In the presence of abundant amino acids, the GATOR2 complex mediates ubiquitination of the NPRL2 core component of the GATOR1 complex, leading to GATOR1 inactivation. In the absence of amino acids, GATOR2 is inhibited, activating the GATOR1 complex. The chain is Nucleoporin SEH1 (seh1l) from Xenopus tropicalis (Western clawed frog).